A 253-amino-acid polypeptide reads, in one-letter code: Proproteinase E (253 aa).

A propeptide spans 1-11 (FSQPFSRPSSR) (activation peptide). The 240-residue stretch at 12 to 251 (VVNGEDAVPY…FIDWIDETIA (240 aa)) folds into the Peptidase S1 domain. 5 cysteine pairs are disulfide-bonded: C41–C57, C100–C103, C140–C206, C171–C187, and C196–C227.

The protein belongs to the peptidase S1 family. Monomer. The zymogen is secreted as a ternary complex composed of procarboxypeptidase A, chymotrypsinogen C and proproteinase E. In terms of tissue distribution, pancreas.

The protein localises to the secreted. Its subcellular location is the extracellular space. May protect procarboxypeptidase A against denaturation in the acidic environment of the ruminant duodenum. This is Proproteinase E from Bos taurus (Bovine).